The primary structure comprises 501 residues: Histidine--tRNA ligase (501 aa).

Belongs to the class-II aminoacyl-tRNA synthetase family. In terms of assembly, homodimer.

The protein resides in the cytoplasm. The catalysed reaction is tRNA(His) + L-histidine + ATP = L-histidyl-tRNA(His) + AMP + diphosphate + H(+). The polypeptide is Histidine--tRNA ligase (Methylocella silvestris (strain DSM 15510 / CIP 108128 / LMG 27833 / NCIMB 13906 / BL2)).